The chain runs to 286 residues: Urease accessory protein UreD 2 (286 aa).

The protein belongs to the UreD family. In terms of assembly, ureD, UreF and UreG form a complex that acts as a GTP-hydrolysis-dependent molecular chaperone, activating the urease apoprotein by helping to assemble the nickel containing metallocenter of UreC. The UreE protein probably delivers the nickel.

Its subcellular location is the cytoplasm. In terms of biological role, required for maturation of urease via the functional incorporation of the urease nickel metallocenter. This is Urease accessory protein UreD 2 from Bradyrhizobium sp. (strain ORS 278).